Consider the following 268-residue polypeptide: uncharacterized protein (268 aa).

The tract at residues 45–64 (SDTQGPAPGINGQGKPSPGA) is disordered.

This is an uncharacterized protein from Aquifex aeolicus (strain VF5).